Consider the following 288-residue polypeptide: 2-methoxy-6-polyprenyl-1,4-benzoquinol methylase, mitochondrial (288 aa).

The transit peptide at 1 to 27 (MALRSVSRRLGSRILNQRSFVASLHSH) directs the protein to the mitochondrion. S-adenosyl-L-methionine contacts are provided by residues T94, D130, and 160–161 (DA).

The protein belongs to the class I-like SAM-binding methyltransferase superfamily. MenG/UbiE family. Component of a multi-subunit COQ enzyme complex.

The protein resides in the mitochondrion inner membrane. It carries out the reaction a 2-methoxy-6-(all-trans-polyprenyl)benzene-1,4-diol + S-adenosyl-L-methionine = a 5-methoxy-2-methyl-3-(all-trans-polyprenyl)benzene-1,4-diol + S-adenosyl-L-homocysteine + H(+). It participates in cofactor biosynthesis; ubiquinone biosynthesis. Methyltransferase required for the conversion of 2-polyprenyl-6-methoxy-1,4-benzoquinol (DDMQH2) to 2-polyprenyl-3-methyl-6-methoxy-1,4-benzoquinol (DMQH2). The chain is 2-methoxy-6-polyprenyl-1,4-benzoquinol methylase, mitochondrial from Arabidopsis thaliana (Mouse-ear cress).